We begin with the raw amino-acid sequence, 1153 residues long: MSQEPTTYSLFLFLFLSHGVSSYTVPNSRQDLHPLLQNMAEEIIDGSYLNALLDLIQFQSSHVWTDDLSHRVLAYLNSRNVAFTIPSLQAAVENHLEQRLHQPQKLLEDLRKTDAQQFRTAMKCLLEDKKDGLDLKDIIIDLGEIRERALQSPGVNRSLFLITLERCFQMLNSLECVEILGKVLRGSSGSFLQPDITERLPRDLREDAFKNLSAVFKDLYDKTSAHSQRALYSWMTGILQTSSNATDDSASWVSAEHLWVLGRYMVHLSFEEITKISPIEIGLFISYDNATKQLDMVYDITPELAQAFLERISSSNFNMRNTSTIHRQAHELWALEPFPKMLGLLVCFYNDLELLDATVAQVLLYQMIKCSHLRGFQAGVQKLKAELLDIAMENQTLNETLGSLSDAVVGLTYSQLESLSPEAVHGAISTLNQVSGWAKSQVIILSAKYLAHEKVLSFYNVSQMGALLAGVSTQAFCSMKRKDISQVLRSAVSQYVSDLSPAQQQGILSKMVQAEDTAPGIVEIQGAFFKEVSLFDLRRQPGFNSTVLKDKELGRSQALFLYELLLKTTRRPEELLSAGQLVKGVTCSHIDAMSTDFFLAHFQDFQNNFALLSPYQVNCLAWKYWEVSRLSMPPFLLAALPARYLASVPASQCVPFLISLGKSWLDSLVLDSHKKTSVLRKVQQCLDDSIADEYTVDIMGNLLCHLPAAIIDRGISPRAWATALHGLRDCPDLNPEQKAAVRLKLLGQYGLPQHWTAETTKDLGPFLVLFSGDELSSIATKFPEILLQAASKMARTLPTKEFLWAVFQSVRNSSDKIPSYDPMPGCHGVVAPSSDDIFKLAEANACWALEDLRCMEEDTFIRTVELLGAVQGFSRPQLMTLKEKAIQVWDMPSYWREHHIVSLGRIALALNESELEQLDLSSIDTVASLSWQTEWTPGQAESILQGYLDDSGYSIQDLKSFHLVGLGATLCAINITEIPLIKISEFRVVVARIGTLLCSTHVLAEFKRKAEVVFGDPTEWTSSVLQELGTIAAGLTKAELRMLDKDLMPYFQPSAIKCLPDEIFKELSAEQIASLGPENAAAVTHAQRRRLSPLQLQSLQQALDGAKTHSWQDAPASAGPTRTSSSRSPAGALQSWGLWLGCPLLVLMAKLLW.

The signal sequence occupies residues 1-22 (MSQEPTTYSLFLFLFLSHGVSS). Asn156 carries N-linked (GlcNAc...) asparagine glycosylation. N-linked (GlcNAc...) (complex) asparagine glycosylation occurs at Asn211. N-linked (GlcNAc...) asparagine glycosylation is found at Asn244, Asn289, Asn321, Asn394, Asn398, Asn460, Asn544, Asn812, Asn911, and Asn974. The disordered stretch occupies residues 1109–1128 (HSWQDAPASAGPTRTSSSRS). A lipid anchor (GPI-anchor amidated alanine) is attached at Ala1130. The propeptide at 1131-1153 (GALQSWGLWLGCPLLVLMAKLLW) is removed in mature form.

It belongs to the stereocilin family.

It is found in the apical cell membrane. It localises to the secreted. The protein resides in the extracellular space. The protein localises to the extracellular matrix. Its function is as follows. May act as an adhesion molecule. The polypeptide is Otoancorin (OTOA) (Homo sapiens (Human)).